Here is a 241-residue protein sequence, read N- to C-terminus: Ribonuclease PH (241 aa).

Phosphate-binding positions include arginine 89 and 127–129; that span reads GTR.

Belongs to the RNase PH family. In terms of assembly, homohexameric ring arranged as a trimer of dimers.

The enzyme catalyses tRNA(n+1) + phosphate = tRNA(n) + a ribonucleoside 5'-diphosphate. Its function is as follows. Phosphorolytic 3'-5' exoribonuclease that plays an important role in tRNA 3'-end maturation. Removes nucleotide residues following the 3'-CCA terminus of tRNAs; can also add nucleotides to the ends of RNA molecules by using nucleoside diphosphates as substrates, but this may not be physiologically important. Probably plays a role in initiation of 16S rRNA degradation (leading to ribosome degradation) during starvation. The protein is Ribonuclease PH of Xylella fastidiosa (strain 9a5c).